The following is a 609-amino-acid chain: Tyrosyl-DNA phosphodiesterase 1 (609 aa).

Positions 1–12 are enriched in polar residues; it reads MSQESSYGKWTI. The disordered stretch occupies residues 1–154; it reads MSQESSYGKW…EYETSGEGQD (154 aa). S61, S119, and S132 each carry phosphoserine. Residues 127–143 show a composition bias toward basic and acidic residues; that stretch reads KVEDRSPPDSHRAQRAD. T148 bears the Phosphothreonine mark. At S149 the chain carries Phosphoserine. The Nucleophile role is filled by H264. K266 lines the substrate pocket. The interaction with DNA stretch occupies residues 401–404; the sequence is SIGS. The active-site Proton donor/acceptor is H494. Substrate is bound at residue K496.

Belongs to the tyrosyl-DNA phosphodiesterase family. In terms of assembly, monomer.

It localises to the nucleus. Its subcellular location is the cytoplasm. DNA repair enzyme that can remove a variety of covalent adducts from DNA through hydrolysis of a 3'-phosphodiester bond, giving rise to DNA with a free 3' phosphate. Catalyzes the hydrolysis of dead-end complexes between DNA and the topoisomerase I active site tyrosine residue. Hydrolyzes 3'-phosphoglycolates on protruding 3' ends on DNA double-strand breaks due to DNA damage by radiation and free radicals. Acts on blunt-ended double-strand DNA breaks and on single-stranded DNA. Has low 3'exonuclease activity and can remove a single nucleoside from the 3'end of DNA and RNA molecules with 3'hydroxyl groups. Has no exonuclease activity towards DNA or RNA with a 3'phosphate. The polypeptide is Tyrosyl-DNA phosphodiesterase 1 (Tdp1) (Rattus norvegicus (Rat)).